A 250-amino-acid polypeptide reads, in one-letter code: Low affinity immunoglobulin gamma Fc region receptor III-A (250 aa).

The signal sequence occupies residues 1 to 16 (MWQLLPPAALLLLVSA). The Extracellular portion of the chain corresponds to 17-208 (DTQTADPSKA…VSSFFLPWHQ (192 aa)). Ig-like C2-type domains lie at 23 to 105 (PSKA…LEVH) and 99 to 189 (PVKL…VQIT). 2 cysteine pairs are disulfide-bonded: cysteine 47–cysteine 89 and cysteine 128–cysteine 172. N-linked (GlcNAc...) asparagine glycosylation is found at asparagine 56 and asparagine 63. The N-linked (GlcNAc...) asparagine glycan is linked to asparagine 180. A helical membrane pass occupies residues 209-225 (ITFCLVMGVLFAVDTGL). Topologically, residues 226-250 (YFSVRRHLQSSEEWRDGKVTWSKGP) are cytoplasmic.

Forms a heterooligomeric complex with ITAM-containing signaling subunits FCER1G. Interacts (via transmembrane domain) with signaling subunits; this interaction is a prerequisite for receptor complex expression on the cell surface and intracellular signal transduction. Binds the Fc region of antigen-complexed IgG. Expressed in gamma-delta T cells.

The protein resides in the cell membrane. Functionally, receptor for the invariable Fc fragment of immunoglobulin gamma (IgG). Optimally activated upon binding of clustered antigen-IgG complexes displayed on cell surfaces, triggers lysis of antibody-coated cells, a process known as antibody-dependent cellular cytotoxicity (ADCC). Does not bind free monomeric IgG, thus avoiding inappropriate effector cell activation in the absence of antigenic trigger. Mediates IgG effector functions on natural killer (NK) cells. Binds antigen-IgG complexes generated upon infection and triggers NK cell-dependent cytokine production and degranulation to limit viral load and propagation. Fc-binding subunit that associates with FCER1G adapters to form functional signaling complexes. Following the engagement of antigen-IgG complexes, triggers phosphorylation of immunoreceptor tyrosine-based activation motif (ITAM)-containing adapter with subsequent activation of phosphatidylinositol 3-kinase signaling and sustained elevation of intracellular calcium that ultimately drive NK cell activation. Mediates enhanced ADCC in response to afucosylated IgGs. The sequence is that of Low affinity immunoglobulin gamma Fc region receptor III-A from Bos taurus (Bovine).